A 108-amino-acid chain; its full sequence is Large ribosomal subunit protein uL24 (108 aa).

Belongs to the universal ribosomal protein uL24 family. Part of the 50S ribosomal subunit.

One of two assembly initiator proteins, it binds directly to the 5'-end of the 23S rRNA, where it nucleates assembly of the 50S subunit. In terms of biological role, one of the proteins that surrounds the polypeptide exit tunnel on the outside of the subunit. The polypeptide is Large ribosomal subunit protein uL24 (Citrifermentans bemidjiense (strain ATCC BAA-1014 / DSM 16622 / JCM 12645 / Bem) (Geobacter bemidjiensis)).